The chain runs to 502 residues: Probable malate:quinone oxidoreductase (502 aa).

Belongs to the MQO family. Requires FAD as cofactor.

It carries out the reaction (S)-malate + a quinone = a quinol + oxaloacetate. It functions in the pathway carbohydrate metabolism; tricarboxylic acid cycle; oxaloacetate from (S)-malate (quinone route): step 1/1. This is Probable malate:quinone oxidoreductase from Synechococcus sp. (strain CC9902).